Consider the following 482-residue polypeptide: Glutamyl-tRNA(Gln) amidotransferase subunit A (482 aa).

Catalysis depends on charge relay system residues Lys75 and Ser150. The Acyl-ester intermediate role is filled by Ser174.

This sequence belongs to the amidase family. GatA subfamily. As to quaternary structure, heterotrimer of A, B and C subunits.

The catalysed reaction is L-glutamyl-tRNA(Gln) + L-glutamine + ATP + H2O = L-glutaminyl-tRNA(Gln) + L-glutamate + ADP + phosphate + H(+). Functionally, allows the formation of correctly charged Gln-tRNA(Gln) through the transamidation of misacylated Glu-tRNA(Gln) in organisms which lack glutaminyl-tRNA synthetase. The reaction takes place in the presence of glutamine and ATP through an activated gamma-phospho-Glu-tRNA(Gln). This Thermosynechococcus vestitus (strain NIES-2133 / IAM M-273 / BP-1) protein is Glutamyl-tRNA(Gln) amidotransferase subunit A.